The chain runs to 68 residues: MRTSYLLLFTLCLLLSEMASGDNFLTGLGHRSDHYNCVRSGGQCLYSACPIYTKIQGTCYHGKAKCCK.

The signal sequence occupies residues 1–21 (MRTSYLLLFTLCLLLSEMASG). A propeptide spanning residues 22–32 (DNFLTGLGHRS) is cleaved from the precursor. 3 disulfide bridges follow: C37-C66, C44-C59, and C49-C67.

Belongs to the beta-defensin family. As to quaternary structure, monomer. Homodimer.

The protein localises to the secreted. Its subcellular location is the membrane. Has bactericidal activity. May act as a ligand for C-C chemokine receptor CCR6. Positively regulates the sperm motility and bactericidal activity in a CCR6-dependent manner. Binds to CCR6 and triggers Ca2+ mobilization in the sperm which is important for its motility. This Allochrocebus preussi (Preuss's monkey) protein is Beta-defensin 1 (DEFB1).